Here is a 921-residue protein sequence, read N- to C-terminus: Leucine--tRNA ligase (921 aa).

A 'HIGH' region motif is present at residues 41–52; sequence PYPSGSGLHVGH. The 'KMSKS' region motif lies at 695–699; that stretch reads KMSKS. Lys-698 provides a ligand contact to ATP.

It belongs to the class-I aminoacyl-tRNA synthetase family.

It is found in the cytoplasm. The catalysed reaction is tRNA(Leu) + L-leucine + ATP = L-leucyl-tRNA(Leu) + AMP + diphosphate. The chain is Leucine--tRNA ligase from Cytophaga hutchinsonii (strain ATCC 33406 / DSM 1761 / CIP 103989 / NBRC 15051 / NCIMB 9469 / D465).